The sequence spans 528 residues: Abrin-d (528 aa).

Q1 carries the post-translational modification Pyrrolidone carboxylic acid. The active site involves E164. Residue N200 is glycosylated (N-linked (GlcNAc...) asparagine). Intrachain disulfides connect C247–C269, C286–C305, and C329–C346. The region spanning 273–400 is the Ricin B-type lectin 1 domain; the sequence is YEPTVRIGGR…YLMRQGWRTG (128 aa). The stretch at 283-325 is one 1-alpha repeat; the sequence is DGMCVDVYDDGYHNGNRIIAWKCKDRLEENQLWTLKSDLTIRS. A 1-beta repeat occupies 326–366; sequence NGKCLTTEGYAPGNYVMIYDCTSAVAEATYWEIWDNGTIIN. N-linked (GlcNAc...) asparagine glycosylation is found at N361 and N401. Residues 369–401 form a 1-gamma repeat; the sequence is SALVLSAESSSMGGTLTVQTNEYLMRQGWRTGN. Positions 403-527 constitute a Ricin B-type lectin 2 domain; that stretch reads TSPFVTSISG…GKPNQIWLTL (125 aa). One copy of the 2-alpha repeat lies at 414-449; sequence SDLCMQAQGSNVWLADCDNNKKEQQWALYTDGSIRS. Cystine bridges form between C417–C430 and C456–C473. One copy of the 2-beta repeat lies at 453–492; sequence TNNCLTSKDHKQGSPIVLMACSNGWASQRWLFKNDGSIYS. A 2-gamma repeat occupies 495 to 528; sequence DDMVMDVKGSDPSLKQIILWPYTGKPNQIWLTLF.

This sequence in the N-terminal section; belongs to the ribosome-inactivating protein family. Type 2 RIP subfamily. As to quaternary structure, disulfide-linked dimer of A and B chains.

It catalyses the reaction Endohydrolysis of the N-glycosidic bond at one specific adenosine on the 28S rRNA.. Functionally, the A chain is responsible for inhibiting protein synthesis through the catalytic inactivation of 60S ribosomal subunits by removing adenine from position 4,324 of 28S rRNA. The B chain is a galactose-specific lectin that facilitates the binding of abrin to the cell membrane that precedes endocytosis. This is Abrin-d from Abrus precatorius (Indian licorice).